The following is a 292-amino-acid chain: Elongation factor Ts (292 aa).

The involved in Mg(2+) ion dislocation from EF-Tu stretch occupies residues 80 to 83 (TDFV).

Belongs to the EF-Ts family.

The protein localises to the cytoplasm. Functionally, associates with the EF-Tu.GDP complex and induces the exchange of GDP to GTP. It remains bound to the aminoacyl-tRNA.EF-Tu.GTP complex up to the GTP hydrolysis stage on the ribosome. This Pediococcus pentosaceus (strain ATCC 25745 / CCUG 21536 / LMG 10740 / 183-1w) protein is Elongation factor Ts.